The chain runs to 34 residues: U10-ctenitoxin-Pr1a (34 aa).

4 cysteine pairs are disulfide-bonded: Cys-2/Cys-15, Cys-9/Cys-20, Cys-14/Cys-31, and Cys-22/Cys-29.

As to expression, expressed by the venom gland.

Its subcellular location is the secreted. Functionally, non-toxic to mice and insects. In Phoneutria reidyi (Brazilian Amazonian armed spider), this protein is U10-ctenitoxin-Pr1a.